The sequence spans 165 residues: MTTRKESELEGVTLLGNQGTNYLFEYAPDVLESFPNKHVNRDYFVKFNCPEFTSLCPKTGQPDFATIYISYIPDEKMVESKSLKLYLFSFRNHGDFHEDCMNIIMNDLIELMDPRYIEVWGKFTPRGGISIDPYTNYGKPGTKYEKMAEYRMMNHDLYPETIDNR.

The active-site Thioimide intermediate is the C56. The active-site Proton donor is the D63. Residues 78–80 and 97–98 contribute to the substrate site; these read VES and HE. 2 residues coordinate Mg(2+): D163 and R165.

Belongs to the GTP cyclohydrolase I family. QueF type 1 subfamily. In terms of assembly, forms an asymmetric tunnel-fold homodecamer of two head-to-head facing pentamers, harboring 10 active sites at the intersubunit interfaces. The cofactor is Does not require a metal cofactor..

The protein localises to the cytoplasm. The catalysed reaction is 7-aminomethyl-7-carbaguanine + 2 NADP(+) = 7-cyano-7-deazaguanine + 2 NADPH + 3 H(+). Its pathway is tRNA modification; tRNA-queuosine biosynthesis. With respect to regulation, activity is strongly inhibited by Cu(2+) and Fe(3+). Its function is as follows. Catalyzes the NADPH-dependent reduction of 7-cyano-7-deazaguanine (preQ0) to 7-aminomethyl-7-deazaguanine (preQ1), a late step in the queuosine pathway. The polypeptide is NADPH-dependent 7-cyano-7-deazaguanine reductase (queF) (Bacillus subtilis (strain 168)).